The following is a 2006-amino-acid chain: Sodium channel protein type 2 subunit alpha (2006 aa).

Residue serine 4 is modified to Phosphoserine. Residues 28-61 (RIAEEKAKRPKQERKDEDDENGPKPNSDLEAGKS) form a disordered region. Residue lysine 38 forms a Glycyl lysine isopeptide (Lys-Gly) (interchain with G-Cter in SUMO1) linkage. One copy of the I repeat lies at 111-456 (ILTPFNPIRK…QQMLEQLKKQ (346 aa)). The helical transmembrane segment at 130–148 (LFNVLIMCTILTNCVFMTM) threads the bilayer. A helical membrane pass occupies residues 156 to 176 (KNVEYTFTGIYTFESLIKILA). A helical membrane pass occupies residues 191–208 (WNWLDFTVITFAYVTEFV). Residues 215–231 (ALRTFRVLRALKTISVI) form a helical membrane-spanning segment. A helical transmembrane segment spans residues 251-270 (VMILTVFCLSVFALIGLQLF). A disulfide bridge links cysteine 278 with cysteine 338. Asparagine 285, asparagine 291, asparagine 297, asparagine 303, asparagine 308, and asparagine 340 each carry an N-linked (GlcNAc...) asparagine glycan. Positions 370–394 (FSWAFLSLFRLMTQDFWENLYQLTL) form an intramembrane region, pore-forming. A helical membrane pass occupies residues 402–422 (MIFFVLVIFLGSFYLINLILA). Serine 468, serine 471, serine 484, serine 526, serine 528, serine 531, serine 553, serine 554, serine 558, serine 573, serine 576, serine 589, serine 610, serine 623, serine 687, serine 688, and serine 722 each carry phosphoserine. Residues 494–529 (SSKSEKELKNRRKKKKQKEQAGEEEKEDAVRKSASE) are disordered. Residues 511–529 (KEQAGEEEKEDAVRKSASE) are compositionally biased toward basic and acidic residues. Positions 589–635 (SENDFADDEHSTFEDNDSRRDSLFVPHRHGERRPSNVSQASRASRGI) are disordered. Residues 596-610 (DEHSTFEDNDSRRDS) are compositionally biased toward basic and acidic residues. An II repeat occupies 742 to 1014 (CCKPWLKVKH…QIAVGRMQKG (273 aa)). Residues 761–779 (FVDLAITICIVLNTLFMAM) form a helical membrane-spanning segment. A helical transmembrane segment spans residues 791–810 (VLSVGNLVFTGIFTAEMFLK). The chain crosses the membrane as a helical span at residues 825–844 (NIFDGFIVSLSLMELGLANV). Residues 847–864 (LSVLRSFRLLRVFKLAKS) traverse the membrane as a helical segment. Residues 881–899 (ALGNLTLVLAIIVFIFAVV) traverse the membrane as a helical segment. Cysteines 913 and 919 form a disulfide. A binds SCN2B region spans residues 918–919 (DC). An intramembrane region (pore-forming) is located at residues 929-949 (FFHSFLIVFRVLCGEWIETMW). A disulfide bridge links cysteine 951 with cysteine 960. Residues 963-983 (VFMMVMVIGNLVVLNLFLALL) form a helical membrane-spanning segment. Positions 1121 to 1167 (EEFSSESDMEESKEKLNATSSSEGSTVDIGAPAEGEQPEAEPEESLE) are disordered. Positions 1156 to 1167 (EQPEAEPEESLE) are enriched in acidic residues. One copy of the III repeat lies at 1191 to 1505 (KGKLWWNLRK…KKYYNAMKKL (315 aa)). The helical transmembrane segment at 1211–1228 (FETFIVFMILLSSGALAF) threads the bilayer. Residues 1242-1260 (MLEYADKVFTYIFILEMLL) traverse the membrane as a helical segment. A helical membrane pass occupies residues 1275–1293 (WCWLDFLIVDVSLVSLTAN). The chain crosses the membrane as a helical span at residues 1302–1320 (AIKSLRTLRALRPLRALSR). A helical membrane pass occupies residues 1338–1357 (IMNVLLVCLIFWLIFSIMGV). Residues cysteine 1367 and cysteine 1387 are joined by a disulfide bond. Positions 1410-1431 (GLGYLSLLQVATFKGWMDIMYA) form an intramembrane region, pore-forming. The chain crosses the membrane as a helical span at residues 1449–1470 (YMYLYFVIFIIFGSFFTLNLFI). Serine 1507 carries the post-translational modification Phosphoserine. Residues 1514–1812 (IPRPANKFQG…WEKFDPDATQ (299 aa)) form an IV repeat. A helical membrane pass occupies residues 1534-1551 (FDISIMILICLNMVTMMV). The chain crosses the membrane as a helical span at residues 1563–1581 (ILYWINLVFIVLFTGECVL). A helical membrane pass occupies residues 1594–1611 (GWNIFDFVVVILSIVGMF). Residues 1625-1641 (LFRVIRLARIGRILRLI) traverse the membrane as a helical segment. A helical membrane pass occupies residues 1661–1678 (LFNIGLLLFLVMFIYAIF). Positions 1701–1723 (FGNSMICLFQITTSAGWDGLLAP) form an intramembrane region, pore-forming. An intrachain disulfide couples cysteine 1732 to cysteine 1747. The chain crosses the membrane as a helical span at residues 1754 to 1776 (IFFFVSYIIISFLVVVNMYIAVI). The 30-residue stretch at 1906–1935 (EEVSAIVIQRAYRRYLLKQKVKKVSSIYKK) folds into the IQ domain. A Phosphoserine modification is found at serine 1931. The span at 1934–1965 (KKDKGKEDEGTPIKEDIITDKLNENSTPEKTD) shows a compositional bias: basic and acidic residues. The disordered stretch occupies residues 1934-2006 (KKDKGKEDEG…KGKDIRESKK (73 aa)). Residues threonine 1944, threonine 1964, and threonine 1967 each carry the phosphothreonine modification. Residue serine 1972 is modified to Phosphoserine. Basic and acidic residues predominate over residues 1980-2006 (TKPEKEKFEKDKSEKEDKGKDIRESKK).

It belongs to the sodium channel (TC 1.A.1.10) family. Nav1.2/SCN2A subfamily. Heterooligomer of a large alpha subunit and a smaller beta subunit. Heterooligomer with SCN2B or SCN4B; disulfide-linked. Interacts with NEDD4L. Interacts with CALM. Interacts with TMEM233. Sumoylated at Lys-38. Sumoylation is induced by hypoxia, increases voltage-gated sodium current and mediates the early response to acute hypoxia in neurons. Sumoylated SCN2A is located at the cell membrane. In terms of tissue distribution, expressed in brain (at protein level). Detected in hippocampus, cortex and brain stem.

Its subcellular location is the cell membrane. It carries out the reaction Na(+)(in) = Na(+)(out). Mediates the voltage-dependent sodium ion permeability of excitable membranes. Assuming opened or closed conformations in response to the voltage difference across the membrane, the protein forms a sodium-selective channel through which Na(+) ions may pass in accordance with their electrochemical gradient. Implicated in the regulation of hippocampal replay occurring within sharp wave ripples (SPW-R) important for memory. The chain is Sodium channel protein type 2 subunit alpha from Mus musculus (Mouse).